Consider the following 273-residue polypeptide: Protein B4 (273 aa).

The segment at 1 to 24 (MAPKKAVAAPEGGNKENAAVKGSS) is disordered. One can recognise an H15 domain in the interval 40–118 (SHPPTLSMVV…GATGRFKLAK (79 aa)). Positions 120–273 (VKTTKAGKEN…AGKKGKKVTN (154 aa)) are disordered. Residues 154–256 (AKTEKEPKGE…KDVKAQKDST (103 aa)) show a composition bias toward basic and acidic residues. Tandem repeats lie at residues 189–198 (KEAKEVDKAN), 199–208 (KEAKEVDKAN), and 209–217 (KEAKEVDKA). The interval 189–217 (KEAKEVDKANKEAKEVDKANKEAKEVDKA) is 3 X 10 AA tandem repeats. The span at 264 to 273 (AGKKGKKVTN) shows a compositional bias: basic residues.

This sequence belongs to the histone H1/H5 family. As to quaternary structure, interacts with nap1l1.

It localises to the nucleus. The protein resides in the chromosome. The chain is Protein B4 (b4) from Xenopus laevis (African clawed frog).